We begin with the raw amino-acid sequence, 970 residues long: m7GpppN-mRNA hydrolase (970 aa).

The region spanning 101–228 is the Nudix hydrolase domain; the sequence is KSIPVRGAAI…IKYYLINSMM (128 aa). Ser-116 carries the post-translational modification Phosphoserine. The short motif at 134 to 155 is the Nudix box element; the sequence is GKISKDENDIDCCIREVKEEIG. Mn(2+) contacts are provided by Glu-149 and Glu-153. Residues 302-314 are compositionally biased toward basic and acidic residues; the sequence is QHLKEQSGEHNQQ. Disordered stretches follow at residues 302–341, 417–465, 501–520, and 528–692; these read QHLK…ANNK, AVSQ…PKLK, SSQK…NDSV, and YEDF…LSST. The segment covering 315-334 has biased composition (low complexity); that stretch reads KDQQSSFSSQQQPSIFPSLS. Position 439 is a phosphoserine (Ser-439). Over residues 528 to 539 the composition is skewed to acidic residues; that stretch reads YEDFESSSDEEV. The span at 560–576 shows a compositional bias: basic and acidic residues; sequence SEKDSRRSQKEKPRNDA. A compositionally biased stretch (polar residues) spans 577–590; it reads SKTNLNASAESNSV. Over residues 596-608 the composition is skewed to low complexity; the sequence is KSSPSTQSKQNSS. Positions 625 to 637 are enriched in acidic residues; it reads DAYEVFESSSDEE. Phosphothreonine is present on Thr-677. The span at 677–691 shows a compositional bias: polar residues; it reads TESNKSINETVGLSS. A phosphoserine mark is found at Ser-679, Ser-682, Ser-751, Ser-771, Ser-773, and Ser-778. Positions 831-867 are disordered; sequence LKKNDSTGYPRTEGGPSSEMSTSMKRNDATNNQELDK. The span at 848-863 shows a compositional bias: polar residues; it reads SEMSTSMKRNDATNNQ.

It belongs to the Nudix hydrolase family. DCP2 subfamily. In terms of assembly, component of the decapping complex composed of DCP1 and DCP2. Interacts with mRNA, LSM2, LSM4 and LSM8. Interacts with EDC3. It depends on Mn(2+) as a cofactor.

It is found in the cytoplasm. It localises to the P-body. It carries out the reaction a 5'-end (N(7)-methyl 5'-triphosphoguanosine)-ribonucleoside in mRNA + H2O = N(7)-methyl-GDP + a 5'-end phospho-ribonucleoside in mRNA + 2 H(+). Functionally, catalytic component of the decapping complex necessary for the degradation of mRNAs, both in normal mRNA turnover and in nonsense-mediated mRNA decay. Removes the 7-methyl guanine cap structure from mRNA molecules, yielding a 5'-phosphorylated mRNA fragment and 7m-GDP. Decapping is the major pathway of mRNA degradation in yeast and occurs through deadenylation, decapping and subsequent 5' to 3' exonucleolytic decay of the transcript body. Blocks autophagy in nutrient-rich conditions by repressing the expression of ATG-related genes through degradation of their transcripts. This chain is m7GpppN-mRNA hydrolase, found in Saccharomyces cerevisiae (strain ATCC 204508 / S288c) (Baker's yeast).